Consider the following 371-residue polypeptide: MIENPIKRRPTRKIRVGSVYVGGDAPISIQSMTNTETCDVDATVAQIQRCADAGVDIMRVSVPSMEAAEAFGKIRQRVSVPLVADIHFDHRIALAVADYGADCLRINPGNIGSDQKVREVVAAARHHGISIRIGVNAGSLEKDLQKKYGEPTGAALLESAMRHIDILDRLDFHEFKVSVKASNVFLTMDAYRLLSQQIDNPLHLGVTEAGIYRTGTVKSAIALGGLLMEGIGDTMRISLAAEPEDEVKIGFDILKSLGLRSNGINFIACPSCSRQEFNVIKVMQALEERLEDIRTPMDLSVIGCKVNGPGEAKEADIGIVGASPRSLVYRNGEKSHLIDTDQLVDEIEDMVRQRVKEIEEAKSKEIIRSSS.

[4Fe-4S] cluster-binding residues include Cys269, Cys272, Cys304, and Glu311.

Belongs to the IspG family. The cofactor is [4Fe-4S] cluster.

The catalysed reaction is (2E)-4-hydroxy-3-methylbut-2-enyl diphosphate + oxidized [flavodoxin] + H2O + 2 H(+) = 2-C-methyl-D-erythritol 2,4-cyclic diphosphate + reduced [flavodoxin]. Its pathway is isoprenoid biosynthesis; isopentenyl diphosphate biosynthesis via DXP pathway; isopentenyl diphosphate from 1-deoxy-D-xylulose 5-phosphate: step 5/6. Functionally, converts 2C-methyl-D-erythritol 2,4-cyclodiphosphate (ME-2,4cPP) into 1-hydroxy-2-methyl-2-(E)-butenyl 4-diphosphate. This Acinetobacter baylyi (strain ATCC 33305 / BD413 / ADP1) protein is 4-hydroxy-3-methylbut-2-en-1-yl diphosphate synthase (flavodoxin).